Here is a 285-residue protein sequence, read N- to C-terminus: Probable endonuclease 4 (285 aa).

H69, H109, E145, D179, H182, H216, D229, H231, and E261 together coordinate Zn(2+).

Belongs to the AP endonuclease 2 family. Requires Zn(2+) as cofactor.

It carries out the reaction Endonucleolytic cleavage to 5'-phosphooligonucleotide end-products.. In terms of biological role, endonuclease IV plays a role in DNA repair. It cleaves phosphodiester bonds at apurinic or apyrimidinic (AP) sites, generating a 3'-hydroxyl group and a 5'-terminal sugar phosphate. This is Probable endonuclease 4 from Salmonella agona (strain SL483).